The sequence spans 117 residues: B-enzyme (117 aa).

The active site involves Asp-89.

It carries out the reaction Hydrolysis of (1-&gt;4)-beta-linkages between N-acetylmuramic acid and N-acetyl-D-glucosamine residues in a peptidoglycan and between N-acetyl-D-glucosamine residues in chitodextrins.. This Bacillus subtilis protein is B-enzyme (lyzB).